A 137-amino-acid chain; its full sequence is Structural protein A137R (137 aa).

It belongs to the asfivirus A137R family. In terms of assembly, interacts with host TBK1.

Its subcellular location is the virion. It localises to the host cytoplasm. Its function is as follows. Plays a role in the inhibition of the host innate immune response. Mechanistically, promotes the autophagy-mediated lysosomal degradation of host TBK1 and affects IRF3 nuclear translocation to block type I IFN production. The sequence is that of Structural protein A137R from African swine fever virus (isolate Warthog/Namibia/Wart80/1980) (ASFV).